We begin with the raw amino-acid sequence, 530 residues long: Amidase FVEG_08295 (530 aa).

Active-site charge relay system residues include Lys-138 and Ser-214. Residues Ser-214 and 235-238 each bind substrate; that span reads IAGS. Ser-238 (acyl-ester intermediate) is an active-site residue.

This sequence belongs to the amidase family.

It catalyses the reaction a monocarboxylic acid amide + H2O = a monocarboxylate + NH4(+). The protein operates within xenobiotic degradation. Its function is as follows. Amidase; part of the Fusarium detoxification of benzoxazolinone cluster 1 (FDB1) involved in the degradation of benzoxazolinones produced by the host plant. Maize, wheat, and rye produce the 2 benzoxazinone phytoanticipins 2,4-dihy-droxy-7-methoxy-1,4-benzoxazin-3-one (DIMBOA) and 2,4-dihydroxy-1,4-benzoxazin-3-one (DIBOA) that, due to their inherent instability once released, spontaneously degrade to the more stable corresponding benzoxazolinones, 6-methoxy-2-benzoxazolinone (MBOA) and 2-benzoxazolinone (BOA), respectively. The first step in the detoxification of benzoxazolinones involves the hydrolysis of the cyclic ester bond of benzoxazolinones by the FDB1 cluster gamma-lactamase MBL1 to aminophenols. MBL1 is able to convert BOA into 2-aminophenol (2-AP), as well as MBOA into 5-methoxy-2-aminophenol (2-AMP). The FDB2 cluster N-malonyltransferase FDB2/NAT1 then metabolizes aminophenols via N-malonylation to non-toxic malonamic acids. FDB2/NAT1 converts 2-AP into N-(2-hydroxyphenyl) malonamic acid (HPMA) and 2-AMP into N-(2-hydroxy-4-methoxyphenyl) malonamic acid (HMPMA). The duplicated dienlactone hydrolases DLH1 and DLH2 may provide redundant function for hydrolyzing the lactone moiety in the BOA molecule. The roles of the amidases an other enzymes encoded by the 2 FDB clusters have not been identified so far. This Gibberella moniliformis (strain M3125 / FGSC 7600) (Maize ear and stalk rot fungus) protein is Amidase FVEG_08295.